A 543-amino-acid chain; its full sequence is Cytochrome P450 2U1 (543 aa).

Transmembrane regions (helical) follow at residues 32-52 (PTGGALLLLVLAALLGWSWLW), 58-78 (GIPPGPAPWPVVGNFGFVLLP), 261-281 (VCLNTQLLLVNICSWLYYLPF), and 342-362 (LFYIIGDLFIAGTDTTTNSLL). Residue Cys-490 participates in heme binding. The chain crosses the membrane as a helical span at residues 495-515 (LAKMELFLMFVSLMQSFTFVL).

It belongs to the cytochrome P450 family. Heme is required as a cofactor.

It is found in the endoplasmic reticulum membrane. It localises to the microsome membrane. The protein localises to the mitochondrion inner membrane. It carries out the reaction an omega-methyl-long-chain fatty acid + reduced [NADPH--hemoprotein reductase] + O2 = an omega-hydroxy-long-chain fatty acid + oxidized [NADPH--hemoprotein reductase] + H2O + H(+). The enzyme catalyses (5Z,8Z,11Z,14Z)-eicosatetraenoate + reduced [NADPH--hemoprotein reductase] + O2 = 19-hydroxy-(5Z,8Z,11Z,14Z)-eicosatetraenoate + oxidized [NADPH--hemoprotein reductase] + H2O + H(+). It catalyses the reaction (5Z,8Z,11Z,14Z)-eicosatetraenoate + reduced [NADPH--hemoprotein reductase] + O2 = 20-hydroxy-(5Z,8Z,11Z,14Z)-eicosatetraenoate + oxidized [NADPH--hemoprotein reductase] + H2O + H(+). The catalysed reaction is N-[(5Z,8Z,11Z,14Z)-eicosatetraenoyl]-serotonin + reduced [NADPH--hemoprotein reductase] + O2 = 2-oxo-N-[(5Z,8Z,11Z,14Z)-eicosatetraenoyl]-serotonin + oxidized [NADPH--hemoprotein reductase] + H2O + H(+). Functionally, a cytochrome P450 monooxygenase involved in the metabolism of arachidonic acid and its conjugates. Mechanistically, uses molecular oxygen inserting one oxygen atom into a substrate, and reducing the second into a water molecule, with two electrons provided by NADPH via cytochrome P450 reductase (CPR; NADPH-ferrihemoprotein reductase). Acts as an omega and omega-1 hydroxylase for arachidonic acid and possibly for other long chain fatty acids. May modulate the arachidonic acid signaling pathway and play a role in other fatty acid signaling processes. May down-regulate the biological activities of N-arachidonoyl-serotonin, an endocannabinoid that has anti-nociceptive effects through inhibition of fatty acid amide hydrolase FAAH, TRPV1 receptor and T-type calcium channels. Catalyzes C-2 oxidation of the indole ring of N-arachidonoyl-serotonin forming a less active product 2-oxo-N-arachidonoyl-serotonin. In Bos taurus (Bovine), this protein is Cytochrome P450 2U1 (CYP2U1).